The following is a 146-amino-acid chain: Large ribosomal subunit protein uL11 (146 aa).

This sequence belongs to the universal ribosomal protein uL11 family. Part of the ribosomal stalk of the 50S ribosomal subunit. Interacts with L10 and the large rRNA to form the base of the stalk. L10 forms an elongated spine to which L12 dimers bind in a sequential fashion forming a multimeric L10(L12)X complex. One or more lysine residues are methylated.

Forms part of the ribosomal stalk which helps the ribosome interact with GTP-bound translation factors. This is Large ribosomal subunit protein uL11 from Treponema pallidum subsp. pallidum (strain SS14).